Reading from the N-terminus, the 203-residue chain is Small ribosomal subunit protein uS4 (203 aa).

An S4 RNA-binding domain is found at 93–156; the sequence is RRLDNVVYRL…LKVPAILEAV (64 aa).

The protein belongs to the universal ribosomal protein uS4 family. As to quaternary structure, part of the 30S ribosomal subunit. Contacts protein S5. The interaction surface between S4 and S5 is involved in control of translational fidelity.

Its function is as follows. One of the primary rRNA binding proteins, it binds directly to 16S rRNA where it nucleates assembly of the body of the 30S subunit. With S5 and S12 plays an important role in translational accuracy. The chain is Small ribosomal subunit protein uS4 from Streptococcus sanguinis (strain SK36).